Here is a 179-residue protein sequence, read N- to C-terminus: Large ribosomal subunit protein uL6 (179 aa).

The protein belongs to the universal ribosomal protein uL6 family. In terms of assembly, part of the 50S ribosomal subunit.

Functionally, this protein binds to the 23S rRNA, and is important in its secondary structure. It is located near the subunit interface in the base of the L7/L12 stalk, and near the tRNA binding site of the peptidyltransferase center. The sequence is that of Large ribosomal subunit protein uL6 from Synechococcus sp. (strain WH7803).